The chain runs to 1037 residues: Receptor kinase-like protein Xa21 (1037 aa).

The signal sequence occupies residues 1–24 (MARSPTSVMISSLLLLLLIGPASS). At 25-665 (DDAAAAAAAR…LLENRKHFPV (641 aa)) the chain is on the extracellular side. 3 N-linked (GlcNAc...) asparagine glycosylation sites follow: Asn-66, Asn-101, and Asn-112. LRR repeat units lie at residues 89–112 (PHRV…SLGN), 113–137 (LSFL…LSRL), 138–161 (SRLQ…IGAC), 163–185 (KLTS…IGAS), 187–210 (KHLS…LGNL), 211–234 (TSLQ…LGQL), 236–259 (SSLL…IWNL), 260–283 (SSLR…AFKT), 285–308 (HLLE…VANA), 310–331 (HLTQ…GFGR), and 333–355 (RNLT…DWGF). Residue Asn-209 is glycosylated (N-linked (GlcNAc...) asparagine). N-linked (GlcNAc...) asparagine glycosylation is found at Asn-247 and Asn-258. An N-linked (GlcNAc...) asparagine glycan is attached at Asn-307. 3 N-linked (GlcNAc...) asparagine glycosylation sites follow: Asn-334, Asn-361, and Asn-385. 11 LRR repeats span residues 362-385 (CSKL…SFSN), 387-411 (STSL…IGNL), 412-435 (IGLQ…LGRL), 437-459 (NLGI…IGNL), 460-482 (TELN…TLSN), 483-507 (LTNL…LFNI), 509-532 (TLSI…IGHL), 533-556 (KNLV…LGDC), 557-580 (QLLR…LGQL), 581-604 (KGLE…LADI), and 606-629 (MLHS…AFAD). N-linked (GlcNAc...) asparagine glycans are attached at residues Asn-447, Asn-458, Asn-482, Asn-495, and Asn-515. Residues Asn-592 and Asn-611 are each glycosylated (N-linked (GlcNAc...) asparagine). The chain crosses the membrane as a helical span at residues 666 to 686 (LPISVSLVAALAILSSLYLLI). Residues 687-1037 (TWHKRTKKGA…PVCEGASLEF (351 aa)) lie on the Cytoplasmic side of the membrane. Positions 689–694 (HKRTKK) match the Nuclear localization signal motif. Position 698 is a phosphoserine (Ser-698). Thr-700 carries the post-translational modification Phosphothreonine. Position 701 is a phosphoserine (Ser-701). Thr-717 carries the phosphothreonine modification. The region spanning 720–1019 (FAPTNLLGSG…GDIIDELNAI (300 aa)) is the Protein kinase domain. Residues 726–734 (LGSGSFGSV) and Lys-748 contribute to the ATP site. Asp-854 (proton acceptor) is an active-site residue.

This sequence belongs to the protein kinase superfamily. Ser/Thr protein kinase family. In terms of assembly, interacts with WRKY62/XB10 in the nucleus. Interacts with SERK2. Mn(2+) serves as cofactor. The cofactor is Mg(2+). In terms of processing, undergoes protein cleavage upon X.oryzae pv. oryzae protein Ax21 detection, thus releasing the processed protein kinase Xa21 chain. Post-translationally, autophosphorylated on serine and threonine residues; these phosphorylation prevents proteolytic degradation.

The protein resides in the cell membrane. Its subcellular location is the endoplasmic reticulum membrane. The protein localises to the nucleus. The catalysed reaction is L-seryl-[protein] + ATP = O-phospho-L-seryl-[protein] + ADP + H(+). It catalyses the reaction L-threonyl-[protein] + ATP = O-phospho-L-threonyl-[protein] + ADP + H(+). In terms of biological role, receptor kinase that detects X.oryzae pv. oryzae protein Ax21 to promote innate immunity. Following X.oryzae pv. oryzae protein Ax21 detection, undergoes cleavage, releasing the processed protein kinase Xa21 chain. The processed protein kinase Xa21 chain released by protein cleavage after X.oryzae pv. oryzae protein Ax21 detection translocates into the nucleus where it can bind and regulate WRKY62, a transcription factor. Confers resistance to the bacterial pathogen X.oryzae pv. oryzae (Xoo). The chain is Receptor kinase-like protein Xa21 from Oryza sativa subsp. japonica (Rice).